The sequence spans 113 residues: Large ribosomal subunit protein uL22 (113 aa).

It belongs to the universal ribosomal protein uL22 family. In terms of assembly, part of the 50S ribosomal subunit.

Its function is as follows. This protein binds specifically to 23S rRNA; its binding is stimulated by other ribosomal proteins, e.g. L4, L17, and L20. It is important during the early stages of 50S assembly. It makes multiple contacts with different domains of the 23S rRNA in the assembled 50S subunit and ribosome. The globular domain of the protein is located near the polypeptide exit tunnel on the outside of the subunit, while an extended beta-hairpin is found that lines the wall of the exit tunnel in the center of the 70S ribosome. The polypeptide is Large ribosomal subunit protein uL22 (Mycoplasmopsis synoviae (strain 53) (Mycoplasma synoviae)).